A 510-amino-acid polypeptide reads, in one-letter code: Cobyric acid synthase (510 aa).

Positions 262–460 constitute a GATase cobBQ-type domain; sequence EIKVGIIKLP…IHGIFENDEW (199 aa). Residue cysteine 343 is the Nucleophile of the active site. Residue histidine 452 is part of the active site.

Belongs to the CobB/CobQ family. CobQ subfamily.

Its pathway is cofactor biosynthesis; adenosylcobalamin biosynthesis. Catalyzes amidations at positions B, D, E, and G on adenosylcobyrinic A,C-diamide. NH(2) groups are provided by glutamine, and one molecule of ATP is hydrogenolyzed for each amidation. This is Cobyric acid synthase from Prochlorococcus marinus (strain MIT 9515).